A 363-amino-acid chain; its full sequence is LIM and cysteine-rich domains protein 1 (363 aa).

S16 carries the post-translational modification Phosphoserine. The PET domain maps to 99–206 (MIMTNPIATG…GEVALPGQGG (108 aa)). Residues 200-233 (ALPGQGGLPKEEGKQQEKPEGAETAAPTANGSLG) are disordered. Positions 208–220 (PKEEGKQQEKPEG) are enriched in basic and acidic residues. LIM zinc-binding domains follow at residues 239–304 (YVCE…SLRP) and 305–363 (RCSG…SKRT).

As to quaternary structure, interacts with beta-dystroglycan. Interacts with GATA1, GATA4 and GATA6. Highly expressed in both skeletal muscle and cardiac muscle.

The protein localises to the cytoplasm. The protein resides in the nucleus. In terms of biological role, transcriptional cofactor that restricts GATA6 function by inhibiting DNA-binding, resulting in repression of GATA6 transcriptional activation of downstream target genes. Represses GATA6-mediated trans activation of lung- and cardiac tissue-specific promoters. Inhibits DNA-binding by GATA4 and GATA1 to the cTNC promoter. Plays a critical role in the development of cardiac hypertrophy via activation of calcineurin/nuclear factor of activated T-cells signaling pathway. The protein is LIM and cysteine-rich domains protein 1 (LMCD1) of Sus scrofa (Pig).